We begin with the raw amino-acid sequence, 418 residues long: AP-3 complex subunit mu-2 (418 aa).

Residues 176–417 (NNEAYFDVIE…MTKAGKFQVR (242 aa)) enclose the MHD domain.

It belongs to the adaptor complexes medium subunit family. In terms of assembly, AP-3 associates with the BLOC-1 complex. Adaptor protein complex 3 (AP-3) is a heterotetramer composed of two large adaptins (delta-type subunit AP3D1 and beta-type subunit AP3B1 or AP3B2), a medium adaptin (mu-type subunit AP3M1 or AP3M2) and a small adaptin (sigma-type subunit APS1 or AP3S2).

It is found in the golgi apparatus. It localises to the cytoplasmic vesicle membrane. In terms of biological role, part of the AP-3 complex, an adaptor-related complex which is not clathrin-associated. The complex is associated with the Golgi region as well as more peripheral structures. It facilitates the budding of vesicles from the Golgi membrane and may be directly involved in trafficking to lysosomes. In concert with the BLOC-1 complex, AP-3 is required to target cargos into vesicles assembled at cell bodies for delivery into neurites and nerve terminals. This Homo sapiens (Human) protein is AP-3 complex subunit mu-2 (AP3M2).